Consider the following 301-residue polypeptide: Inosose dehydratase (301 aa).

This sequence belongs to the IolE/MocC family. It depends on glutathione as a cofactor. Requires Co(2+) as cofactor. Mn(2+) serves as cofactor.

The catalysed reaction is scyllo-inosose = 3D-3,5/4-trihydroxycyclohexane-1,2-dione + H2O. It participates in polyol metabolism; myo-inositol degradation into acetyl-CoA; acetyl-CoA from myo-inositol: step 2/7. Catalyzes the dehydration of inosose (2-keto-myo-inositol, 2KMI or 2,4,6/3,5-pentahydroxycyclohexanone) to 3D-(3,5/4)-trihydroxycyclohexane-1,2-dione (D-2,3-diketo-4-deoxy-epi-inositol). This chain is Inosose dehydratase, found in Lacticaseibacillus casei (strain BL23) (Lactobacillus casei).